The primary structure comprises 196 residues: Rac-like GTP-binding protein ARAC5 (196 aa).

16–21 (AVGKTC) contacts GTP. Residues 35–43 (YVPTVFDNF) carry the Effector region motif. GTP is bound by residues 119 to 121 (KLD) and 159 to 161 (SSK). The residue at position 193 (Cys-193) is a Cysteine methyl ester. Cys-193 is lipidated: S-geranylgeranyl cysteine. A propeptide spans 194-196 (VFL) (removed in mature form).

Belongs to the small GTPase superfamily. Rho family. Interacts with GDI1 and ROPGEF8 homodimer. Binds to SPK1. As to expression, ubiquitous. Preferentially expressed at the tip of root hairs.

The protein resides in the cytoplasm. It localises to the membrane. It is found in the cell membrane. Functionally, involved in cell polarity control during the actin-dependent tip growth of root hairs, thus regulating root hair length and root hair initiation. In terms of biological role, inactive GDP-bound Rho GTPases reside in the cytosol, are found in a complex with Rho GDP-dissociation inhibitors (Rho GDIs), and are released from the GDI protein in order to translocate to membranes upon activation. The protein is Rac-like GTP-binding protein ARAC5 of Arabidopsis thaliana (Mouse-ear cress).